We begin with the raw amino-acid sequence, 492 residues long: Aspartyl/glutamyl-tRNA(Asn/Gln) amidotransferase subunit B (492 aa).

The protein belongs to the GatB/GatE family. GatB subfamily. Heterotrimer of A, B and C subunits.

It carries out the reaction L-glutamyl-tRNA(Gln) + L-glutamine + ATP + H2O = L-glutaminyl-tRNA(Gln) + L-glutamate + ADP + phosphate + H(+). The catalysed reaction is L-aspartyl-tRNA(Asn) + L-glutamine + ATP + H2O = L-asparaginyl-tRNA(Asn) + L-glutamate + ADP + phosphate + 2 H(+). Functionally, allows the formation of correctly charged Asn-tRNA(Asn) or Gln-tRNA(Gln) through the transamidation of misacylated Asp-tRNA(Asn) or Glu-tRNA(Gln) in organisms which lack either or both of asparaginyl-tRNA or glutaminyl-tRNA synthetases. The reaction takes place in the presence of glutamine and ATP through an activated phospho-Asp-tRNA(Asn) or phospho-Glu-tRNA(Gln). The polypeptide is Aspartyl/glutamyl-tRNA(Asn/Gln) amidotransferase subunit B (Bradyrhizobium sp. (strain BTAi1 / ATCC BAA-1182)).